We begin with the raw amino-acid sequence, 38 residues long: Mu-agatoxin-Hc1b (38 aa).

Intrachain disulfides connect Cys3–Cys19, Cys10–Cys24, Cys18–Cys34, and Cys26–Cys32. Ser38 bears the Serine amide mark.

The protein belongs to the neurotoxin 07 (Beta/delta-agtx) family. 02 (aga-3) subfamily. As to expression, expressed by the venom gland.

It localises to the secreted. Functionally, insecticidal neurotoxin that induces irreversible neuromuscular blockade in house crickets (A.domesticus). Modifies presynaptic voltage-gated sodium channels (Nav), causing them to open at the normal resting potential of the nerve. This leads to spontaneous release of neurotransmitter and repetitive action potentials in motor neurons. The polypeptide is Mu-agatoxin-Hc1b (Hololena curta (Funnel-web spider)).